We begin with the raw amino-acid sequence, 415 residues long: Palmitoyl-acyl carrier protein thioesterase, chloroplastic (415 aa).

2 stretches are compositionally biased toward low complexity: residues 1–16 (MVATAASSAFFPLPSA) and 24–41 (KLGNKPSSLSPLKPKSTP). The N-terminal 60 residues, 1 to 60 (MVATAASSAFFPLPSADTSSRPGKLGNKPSSLSPLKPKSTPNGGLQVKANASAPPKINGS), are a transit peptide targeting the chloroplast. The segment at 1 to 81 (MVATAASSAF…QEDAHSAPPP (81 aa)) is disordered. Residues N314, H316, and C351 contribute to the active site.

Belongs to the acyl-ACP thioesterase family.

The protein localises to the plastid. The protein resides in the chloroplast. It catalyses the reaction hexadecanoyl-[ACP] + H2O = hexadecanoate + holo-[ACP] + H(+). Plays an essential role in chain termination during de novo fatty acid synthesis. High thioesterase activity for palmitoyl-ACP versus other acyl-ACPs. In Cuphea hookeriana (Cigar plant), this protein is Palmitoyl-acyl carrier protein thioesterase, chloroplastic (FATB1).